A 455-amino-acid polypeptide reads, in one-letter code: MKYHIVTLGCPKNAVDSEGMDGLLSTQGHQAVASAEEADVIIVNTCSFIAAARAETLGVLKELAGRKRPGQRLIAAGCMAQSHPHEVAGVQGVDATLGTQQWTQINALVGQLERPVIPLTPGQPVATIPLTTTTNGQPTSYADWRTTQIRRTHQTPSAYLKISDGCNLRCAFCTIPSFKGDMRSKPVGAVLAEAQELVAGGVREIVLVAQHLTDYGRDLGLKDGLATLLAELCQVTPPETWIRLMYAYPHGISERLITTMASYPQICHYLDMPLQHAHPATLRRMRRPPDTDRTLRIIAELRAAMPDIAIRSTFIVGYPGETTAEFHALLEFLQTAQLDRVGAFRYSREPGTPAAELPDQVRPQVIERRWHELMRLQQTISYTRNQRWVGRTIKVLIEGNGTADDGSALSIGRSFRDAPEIDGQVFVWGNYPAGTMIPVQVTQATAYDLWGEALS.

The MTTase N-terminal domain maps to 1 to 114 (MKYHIVTLGC…INALVGQLER (114 aa)). Cysteine 10, cysteine 46, cysteine 78, cysteine 166, cysteine 170, and cysteine 173 together coordinate [4Fe-4S] cluster. The 232-residue stretch at 152 to 383 (THQTPSAYLK…MRLQQTISYT (232 aa)) folds into the Radical SAM core domain. A TRAM domain is found at 386–455 (QRWVGRTIKV…AYDLWGEALS (70 aa)).

The protein belongs to the methylthiotransferase family. RimO subfamily. It depends on [4Fe-4S] cluster as a cofactor.

It localises to the cytoplasm. The enzyme catalyses L-aspartate(89)-[ribosomal protein uS12]-hydrogen + (sulfur carrier)-SH + AH2 + 2 S-adenosyl-L-methionine = 3-methylsulfanyl-L-aspartate(89)-[ribosomal protein uS12]-hydrogen + (sulfur carrier)-H + 5'-deoxyadenosine + L-methionine + A + S-adenosyl-L-homocysteine + 2 H(+). In terms of biological role, catalyzes the methylthiolation of an aspartic acid residue of ribosomal protein uS12. The sequence is that of Ribosomal protein uS12 methylthiotransferase RimO from Chloroflexus aurantiacus (strain ATCC 29366 / DSM 635 / J-10-fl).